The sequence spans 467 residues: Cilia- and flagella-associated protein 97 (467 aa).

Disordered regions lie at residues 1–20 (MDRY…FFDS), 76–235 (IAKP…DISP), 336–370 (RQAA…KEQQ), and 412–467 (ALSP…AAWQ). Over residues 124–135 (DNYYPDEEDSSE) the composition is skewed to acidic residues. Positions 162–177 (DFVSTISSSDTEYSDT) are enriched in polar residues. Positions 180–194 (DDGASKSSYQSSKGS) are enriched in low complexity. Residues 198-216 (SPERKPSRSSMRELRHYAE) show a composition bias toward basic and acidic residues. Polar residues predominate over residues 223-235 (TDVTPLSTPDISP). Positions 310–387 (KKNFSFSNDE…ALLKRLESVK (78 aa)) form a coiled coil. Residues 421 to 439 (SVSRLSPSVSSGGFSRMSS) are compositionally biased toward low complexity.

The protein belongs to the CFAP97 family.

This Xenopus tropicalis (Western clawed frog) protein is Cilia- and flagella-associated protein 97.